The sequence spans 312 residues: tRNA pseudouridine synthase B (312 aa).

The Nucleophile role is filled by D38.

It belongs to the pseudouridine synthase TruB family. Type 1 subfamily.

It carries out the reaction uridine(55) in tRNA = pseudouridine(55) in tRNA. Functionally, responsible for synthesis of pseudouridine from uracil-55 in the psi GC loop of transfer RNAs. This is tRNA pseudouridine synthase B from Syntrophus aciditrophicus (strain SB).